Consider the following 32-residue polypeptide: Sodium channel neurotoxin BmK NT2 (32 aa).

The LCN-type CS-alpha/beta domain maps to 2 to 32; sequence RDAYIAKPENCVYHCAGNEGCNNLCTCNGAT.

As to expression, expressed by the venom gland.

The protein resides in the secreted. Alpha toxins bind voltage-independently at site-3 of sodium channels (Nav) and inhibit the inactivation of the activated channels, thereby blocking neuronal transmission. This toxin dose-dependently delays inactivation of voltage-gated sodium channels (Nav) (EC(50)=0.91 uM), and shifts the steady-state activation and inactivation to hyperpolarized direction. In addition, it dose-dependently alters calcium dynamics and increases phosphorylation of MAP kinases 1/3 (MAPK1/MAPK3) and cAMP-response element binding (CREB) proteins in neocortical neurons. This effect is eliminated by tetrodotoxin, a Nav blocker. This Olivierus martensii (Manchurian scorpion) protein is Sodium channel neurotoxin BmK NT2.